The following is a 1479-amino-acid chain: Peroxidasin homolog (1479 aa).

An N-terminal signal peptide occupies residues 1–26 (MAKRSRGPGRRCLLALVLFCAWGTLA). The region spanning 27–63 (VVAQKPGAGCPSRCLCFRTTVRCMHLLLEAVPAVAPQ) is the LRRNT domain. Intrachain disulfides connect Cys-36–Cys-42 and Cys-40–Cys-49. LRR repeat units follow at residues 61–84 (APQT…AFRR), 85–108 (LRNL…AFED), 110–132 (ENLK…AFKG), 133–156 (LASL…SFQH), 157–180 (LPKL…TFNH), and 182–204 (ESMK…LWLA). The region spanning 192 to 244 (NTLHCDCEILWLADLLKTYAESGNAQAAAICEYPRRIQGRSVATITPEELNCE) is the LRRCT domain. Intrachain disulfides connect Cys-196-Cys-243, Cys-198-Cys-222, Cys-267-Cys-317, Cys-363-Cys-412, Cys-454-Cys-502, and Cys-546-Cys-594. 4 Ig-like C2-type domains span residues 246-332 (PRIT…QEVT), 342-428 (PTFV…AFII), 433-520 (PQFT…LTVQ), and 521-610 (PRVT…MVLS). Asn-640, Asn-699, Asn-719, and Asn-731 each carry an N-linked (GlcNAc...) asparagine glycan. Disulfide bonds link Cys-723–Cys-885, Cys-732–Cys-748, Cys-847–Cys-857, and Cys-851–Cys-875. Asp-826 contacts heme b. The active-site Proton acceptor is the His-827. Residue Asp-828 coordinates Ca(2+). An N-linked (GlcNAc...) asparagine glycan is attached at Asn-865. Ca(2+) contacts are provided by Thr-907, Tyr-909, Asp-911, and Ser-913. The cysteines at positions 959 and 970 are disulfide-linked. Asn-964 is a glycosylation site (N-linked (GlcNAc...) asparagine). The heme b site is built by Glu-980 and His-1074. An LRR 7 repeat occupies 1151-1175 (ALDLAAINIQRGRDHGIPPYHDYRV). The residue at position 1176 (Tyr-1176) is a Phosphotyrosine. Cystine bridges form between Cys-1177–Cys-1234 and Cys-1275–Cys-1301. N-linked (GlcNAc...) asparagine glycosylation is present at Asn-1178. Ser-1180 bears the Phosphoserine mark. The LRR 8 repeat unit spans residues 1270–1291 (LARILCDNADNITRVQSDVFRV). Residues Asn-1280, Asn-1368, and Asn-1425 are each glycosylated (N-linked (GlcNAc...) asparagine). The segment at 1315–1411 (CCEDCRTRGQ…QIKKLESRLS (97 aa)) is required in homotrimerization. The segment at 1342–1380 (YQEDKPTKKTRPRKIPSVGRQGEHLSNSTSAFSTRSDAS) is disordered. Polar residues predominate over residues 1365 to 1380 (HLSNSTSAFSTRSDAS). Residues 1413–1471 (TECVDAGGESHANNTKWKKDACTICECKDGQVTCFVEACPPATCAVPVNIPGACCPVCL) enclose the VWFC domain.

This sequence belongs to the peroxidase family. XPO subfamily. In terms of assembly, homotrimer; disulfide-linked. The homotrimer form is predominant. Homooligomer; disulfide-linked. Oligomerization occurs intracellularly before C-terminal proteolytic cleavage. Interacts with PXDNL; this interaction inhibits the peroxidase activity of PXDN. Ca(2+) is required as a cofactor. It depends on heme b as a cofactor. In terms of processing, glycosylated. Four sites are completely N-glycosylated (Asn-640, Asn-731, Asn-865 and Asn-1425), whereas the others are found partially glycosylated. Processed by FURIN and the proteolytic processing largely depends on the peroxidase activity of PXDN. The proteolytic cleavage occurs after intracellular homotrimerization and releases into the extracellular matrix a large, catalytically active fragment and a smaller fragment consisting primarily of the C-terminal VWFC domain. The processing enhances both peroxidase activity and sulfilimine cross-links formation. As to expression, expressed at higher levels in heart, lung, ovary, spleen, intestine and placenta, and at lower levels in liver, colon, pancreas, kidney, thymus, skeletal muscle and prostate. Expressed in tumors such as melanoma, breast cancer, ovarian cancer and glioblastoma. A shorter form probably lacking the signal sequence is found in testis and in EB1 cells undergoing p53/TP53-dependent apoptosis.

Its subcellular location is the secreted. It localises to the extracellular space. The protein resides in the extracellular matrix. It is found in the endoplasmic reticulum. The protein localises to the cell surface. Its subcellular location is the basement membrane. The catalysed reaction is L-lysyl-[collagen] + L-methionyl-[collagen] + H2O2 = [collagen]-L-lysyl-N-S-L-methionyl-[collagen] + 2 H2O + H(+). It carries out the reaction bromide + H2O2 = hypobromite + H2O. The enzyme catalyses L-lysyl-[collagen] + L-methionyl-[collagen] + hypobromite = [collagen]-L-lysyl-N-S-L-methionyl-[collagen] + bromide + H2O + H(+). It catalyses the reaction L-tyrosyl-[protein] + bromide + H2O2 + H(+) = 3-bromo-L-tyrosyl-[protein] + 2 H2O. The catalysed reaction is hypobromite + L-tyrosyl-[protein] + H(+) = 3-bromo-L-tyrosyl-[protein] + H2O. Its activity is regulated as follows. The hypobromous acid formation is activated by increasing nitrite concentrations and inhibited by increasing urate concentrations. Its function is as follows. Catalyzes the two-electron oxidation of bromide by hydrogen peroxide and generates hypobromite as a reactive intermediate which mediates the formation of sulfilimine cross-links between methionine and hydroxylysine residues within an uncross-linked collagen IV/COL4A1 NC1 hexamer. In turns, directly contributes to the collagen IV network-dependent fibronectin/FN and laminin assembly, which is required for full extracellular matrix (ECM)-mediated signaling. Thus, sulfilimine cross-links are essential for growth factor-induced cell proliferation and survival in endothelial cells, an event essential to basement membrane integrity. In addition, through the bromide oxidation, may promote tubulogenesis and induce angiogenesis through ERK1/2, Akt, and FAK pathways. Moreover brominates alpha2 collagen IV chain/COL4A2 at 'Tyr-1485' and leads to bromine enrichment of the basement membranes. In vitro, can also catalyze the two-electron oxidation of thiocyanate and iodide and these two substrates could effectively compete with bromide and thus inhibit the formation of sulfilimine bonds. Binds laminins. May play a role in the organization of eyeball structure and lens development during eye development. This is Peroxidasin homolog from Homo sapiens (Human).